The primary structure comprises 350 residues: Protein RecA (350 aa).

Residue 65 to 72 (GPESSGKT) coordinates ATP. The interval 329–350 (ASPDVKANPVKETEDDMADADI) is disordered. Over residues 341 to 350 (TEDDMADADI) the composition is skewed to acidic residues.

The protein belongs to the RecA family.

Its subcellular location is the cytoplasm. Its function is as follows. Can catalyze the hydrolysis of ATP in the presence of single-stranded DNA, the ATP-dependent uptake of single-stranded DNA by duplex DNA, and the ATP-dependent hybridization of homologous single-stranded DNAs. It interacts with LexA causing its activation and leading to its autocatalytic cleavage. In Pseudomonas fluorescens (strain ATCC BAA-477 / NRRL B-23932 / Pf-5), this protein is Protein RecA.